The sequence spans 701 residues: Elongation factor G 1 (701 aa).

The tr-type G domain occupies 13 to 288; that stretch reads KYTRNIGIMA…GVIDYLPSPL (276 aa). GTP contacts are provided by residues 22-29, 86-90, and 140-143; these read AHIDAGKT, DTPGH, and NKMD.

This sequence belongs to the TRAFAC class translation factor GTPase superfamily. Classic translation factor GTPase family. EF-G/EF-2 subfamily.

The protein localises to the cytoplasm. Catalyzes the GTP-dependent ribosomal translocation step during translation elongation. During this step, the ribosome changes from the pre-translocational (PRE) to the post-translocational (POST) state as the newly formed A-site-bound peptidyl-tRNA and P-site-bound deacylated tRNA move to the P and E sites, respectively. Catalyzes the coordinated movement of the two tRNA molecules, the mRNA and conformational changes in the ribosome. The protein is Elongation factor G 1 of Bdellovibrio bacteriovorus (strain ATCC 15356 / DSM 50701 / NCIMB 9529 / HD100).